The following is a 348-amino-acid chain: tRNA N6-adenosine threonylcarbamoyltransferase (348 aa).

Fe cation-binding residues include H111 and H115. Residues 134–138 (LISGG), D167, G180, and N277 each bind substrate. D305 contacts Fe cation.

It belongs to the KAE1 / TsaD family. The cofactor is Fe(2+).

The protein resides in the cytoplasm. The catalysed reaction is L-threonylcarbamoyladenylate + adenosine(37) in tRNA = N(6)-L-threonylcarbamoyladenosine(37) in tRNA + AMP + H(+). Its function is as follows. Required for the formation of a threonylcarbamoyl group on adenosine at position 37 (t(6)A37) in tRNAs that read codons beginning with adenine. Is involved in the transfer of the threonylcarbamoyl moiety of threonylcarbamoyl-AMP (TC-AMP) to the N6 group of A37, together with TsaE and TsaB. TsaD likely plays a direct catalytic role in this reaction. In Haemophilus ducreyi (strain 35000HP / ATCC 700724), this protein is tRNA N6-adenosine threonylcarbamoyltransferase.